The primary structure comprises 413 residues: Scarecrow-like protein 21 (413 aa).

A GRAS domain is found at 41–413 (IVEAISRGDL…RILVSSCAWK (373 aa)). The tract at residues 48 to 108 (GDLKLVLVAC…VARLAASGSS (61 aa)) is leucine repeat I (LRI). The segment at 127-192 (VYVLHEVCPY…GGAPNIRITG (66 aa)) is VHIID. The VHIID motif lies at 158 to 162 (IHIID). Positions 201–233 (TVKKRLEKLAKKFDVPFRFNAVSRPSCEVEVEN) are leucine repeat II (LRII). Residues 242–336 (LGVNFAYMLH…QHCMARDVVN (95 aa)) are PFYRE. The tract at residues 339 to 413 (ACEGAERIER…RILVSSCAWK (75 aa)) is SAW.

The protein belongs to the GRAS family. In terms of assembly, interacts with Meloidogyne incognita 16D10. In terms of tissue distribution, expressed in seedlings, roots, cotyledons, leaves and flowers.

Its subcellular location is the nucleus. Probable transcription factor involved in plant development. The polypeptide is Scarecrow-like protein 21 (SCL21) (Arabidopsis thaliana (Mouse-ear cress)).